The following is a 1202-amino-acid chain: DNA-directed RNA polymerase subunit beta (1202 aa).

Residues 1154-1202 (NMDEDDDEVVNVDALAKYAEEHKADDKKNEEENKSEATSTTTDDKTNQN) are disordered. The span at 1171-1188 (YAEEHKADDKKNEEENKS) shows a compositional bias: basic and acidic residues.

The protein belongs to the RNA polymerase beta chain family. As to quaternary structure, the RNAP catalytic core consists of 2 alpha, 1 beta, 1 beta' and 1 omega subunit. When a sigma factor is associated with the core the holoenzyme is formed, which can initiate transcription.

The enzyme catalyses RNA(n) + a ribonucleoside 5'-triphosphate = RNA(n+1) + diphosphate. Its function is as follows. DNA-dependent RNA polymerase catalyzes the transcription of DNA into RNA using the four ribonucleoside triphosphates as substrates. This Limosilactobacillus reuteri (strain DSM 20016) (Lactobacillus reuteri) protein is DNA-directed RNA polymerase subunit beta.